A 238-amino-acid polypeptide reads, in one-letter code: RAD9, HUS1, RAD1-interacting nuclear orphan protein 1 (238 aa).

Residues 1–10 (MPPRKKRRQP) show a composition bias toward basic residues. The disordered stretch occupies residues 1-31 (MPPRKKRRQPSQKAPLLFHQQPLEGPKHSCA). At Ser-51 the chain carries Phosphoserine; by PLK1. Positions 55-61 (SWVSPDF) match the RAD1-binding motif motif. Residues 74-105 (KHQNRARHSSRKPTTSKFPHLTFESPQSSSSE) form a disordered region. Residues 75–84 (HQNRARHSSR) are compositionally biased toward basic residues. The D-box signature appears at 125 to 132 (RRPLVPVL). A KEN box motif is present at residues 174-178 (QKENS).

Interacts (when phosphorylated by PLK1) with POLQ; promoting POLQ recruitment to DNA damage sites. Interacts with RAD1; interaction is direct and promotes association with the 9-1-1 (RAD9-RAD1-HUS1) complex. Interacts with RAD18. Interacts with TOPBP1. Interacts with UBE2N. Post-translationally, phosphorylated at Ser-51 by PLK1, promoting interaction with polymerase theta (POLQ). In terms of processing, ubiquitinated and degraded by the APC/C complex upon mitotic exit. As to expression, weakly expressed in testis, prostate, ovary, thymus and small intestine. Expressed strongly in breast cancer cells.

The protein resides in the nucleus. It localises to the chromosome. In terms of biological role, involved in microhomology-mediated end-joining (MMEJ) DNA repair by promoting recruitment of polymerase theta (POLQ) to DNA damage sites during mitosis. MMEJ is an alternative non-homologous end-joining (NHEJ) machinery that takes place during mitosis to repair double-strand breaks in DNA that originate in S-phase. Accumulates in M-phase; following phosphorylation by PLK1, interacts with POLQ, enabling its recruitment to double-strand breaks for subsequent repair. Also involved in the DNA damage response (DDR) signaling in response to genotoxic stresses such as ionizing radiation (IR) during the S phase. Recruited to sites of DNA damage through interaction with the 9-1-1 cell-cycle checkpoint response complex and TOPBP1 in a ATR-dependent manner. Required for the progression of the G1 to S phase transition. Plays a role in the stimulation of CHEK1 phosphorylation. The polypeptide is RAD9, HUS1, RAD1-interacting nuclear orphan protein 1 (Homo sapiens (Human)).